We begin with the raw amino-acid sequence, 118 residues long: Large ribosomal subunit protein bL20c (118 aa).

This sequence belongs to the bacterial ribosomal protein bL20 family.

Its subcellular location is the plastid. The protein localises to the chloroplast. In terms of biological role, binds directly to 23S ribosomal RNA and is necessary for the in vitro assembly process of the 50S ribosomal subunit. It is not involved in the protein synthesizing functions of that subunit. In Adiantum capillus-veneris (Maidenhair fern), this protein is Large ribosomal subunit protein bL20c.